The primary structure comprises 350 residues: Dihydroorotase (350 aa).

The Zn(2+) site is built by histidine 17 and histidine 19. Substrate-binding positions include 19–21 and asparagine 45; that span reads HFR. Residues lysine 103, histidine 140, and histidine 178 each coordinate Zn(2+). Position 103 is an N6-carboxylysine (lysine 103). Histidine 140 provides a ligand contact to substrate. Substrate is bound at residue leucine 223. Zn(2+) is bound at residue aspartate 251. Aspartate 251 is a catalytic residue. Positions 255 and 267 each coordinate substrate.

This sequence belongs to the metallo-dependent hydrolases superfamily. DHOase family. Class II DHOase subfamily. Homodimer. It depends on Zn(2+) as a cofactor.

It carries out the reaction (S)-dihydroorotate + H2O = N-carbamoyl-L-aspartate + H(+). It functions in the pathway pyrimidine metabolism; UMP biosynthesis via de novo pathway; (S)-dihydroorotate from bicarbonate: step 3/3. Functionally, catalyzes the reversible cyclization of carbamoyl aspartate to dihydroorotate. This chain is Dihydroorotase, found in Photorhabdus laumondii subsp. laumondii (strain DSM 15139 / CIP 105565 / TT01) (Photorhabdus luminescens subsp. laumondii).